The following is a 164-amino-acid chain: MEQIFEKLMYASRWIMAPIYLGLSLVLIGLGIKFFQEIFHILPIIFEITEVDLVLVTLSLIDITLVGGLIVMVMFSGYENFVSQLDVGEDSEKLSWLGKLDSGSLKNKVAASIVAISSIHLLKIFMDVKNIDNDKIMWYLLIHITFVLSAFAMGYLDKMTRAGK.

Helical transmembrane passes span 15-35 (IMAP…IKFF), 53-73 (LVLV…IVMV), 108-128 (KVAA…FMDV), and 136-156 (IMWY…MGYL).

This sequence belongs to the UPF0114 family.

It is found in the cell membrane. The chain is UPF0114 protein Sbal223_3668 from Shewanella baltica (strain OS223).